Here is a 75-residue protein sequence, read N- to C-terminus: UPF0346 protein OB1736 (75 aa).

It belongs to the UPF0346 family.

The protein is UPF0346 protein OB1736 of Oceanobacillus iheyensis (strain DSM 14371 / CIP 107618 / JCM 11309 / KCTC 3954 / HTE831).